Consider the following 143-residue polypeptide: Peptide methionine sulfoxide reductase MsrB (143 aa).

Residues 16-139 (DAELRRRLTP…NSAALNFESR (124 aa)) form the MsrB domain. Positions 55, 58, 104, and 107 each coordinate Zn(2+). Cys128 (nucleophile) is an active-site residue.

Belongs to the MsrB Met sulfoxide reductase family. Requires Zn(2+) as cofactor.

It carries out the reaction L-methionyl-[protein] + [thioredoxin]-disulfide + H2O = L-methionyl-(R)-S-oxide-[protein] + [thioredoxin]-dithiol. The sequence is that of Peptide methionine sulfoxide reductase MsrB from Burkholderia cenocepacia (strain HI2424).